Reading from the N-terminus, the 580-residue chain is Glypican-3 (580 aa).

An N-terminal signal peptide occupies residues 1–24 (MAGTVRTACLVVAMLLSLDFPGQA). Q25 bears the Pyrrolidone carboxylic acid mark. Disulfide bonds link C35/C72, C65/C262, C73/C265, C197/C349, C252/C285, C274/C422, and C278/C410. Residues N124 and N241 are each glycosylated (N-linked (GlcNAc...) asparagine). S352 carries the post-translational modification Phosphoserine. The N-linked (GlcNAc...) asparagine glycan is linked to N418. S495 and S509 each carry an O-linked (Xyl...) (glycosaminoglycan) serine glycan. Residue N554 is the site of GPI-anchor amidated asparagine attachment. Positions 555–580 (LGNVHSPLKLLTSMAISVVCFFFLVH) are cleaved as a propeptide — removed in mature form.

Belongs to the glypican family. As to quaternary structure, heterodimer; disulfide-linked. Cleavage by a furin-like convertase results in production of alpha and beta chains which form a disulfide-linked heterodimer. Interacts with DPP4. Interacts with FGF2. Interacts with WNT5A. Also interacts with WNT3A and WNT7B. Interacts with hedgehog protein SHH; the heparan sulfate chains are not required for the interaction. Also interacts with hedgehog protein IHH. Interacts with CD81. Interacts with Wnt receptors FZD4, FZD7 and FZD8; the heparan sulfate chains are required for the interaction. Post-translationally, O-glycosylated; contains heparan sulfate and/or chondroitin sulfate. In terms of processing, cleaved intracellularly by a furin-like convertase to generate 2 subunits, alpha and beta, which remain associated through disulfide bonds and are associated with the cell surface via the GPI-anchor. This processing is essential for its role in inhibition of hedgehog signaling. A second proteolytic event may result in cleavage of the protein on the cell surface, separating it from the GPI-anchor and leading to its shedding from the cell surface.

It is found in the cell membrane. Cell surface proteoglycan. Negatively regulates the hedgehog signaling pathway when attached via the GPI-anchor to the cell surface by competing with the hedgehog receptor PTC1 for binding to hedgehog proteins. Binding to the hedgehog protein SHH triggers internalization of the complex by endocytosis and its subsequent lysosomal degradation. Positively regulates the canonical Wnt signaling pathway by binding to the Wnt receptor Frizzled and stimulating the binding of the Frizzled receptor to Wnt ligands. Positively regulates the non-canonical Wnt signaling pathway. Binds to CD81 which decreases the availability of free CD81 for binding to the transcriptional repressor HHEX, resulting in nuclear translocation of HHEX and transcriptional repression. Inhibits the dipeptidyl peptidase activity of DPP4. Plays a role in limb patterning and skeletal development by controlling the cellular response to BMP4. Modulates the effects of growth factors BMP2, BMP7 and FGF7 on renal branching morphogenesis. Required for coronary vascular development. Plays a role in regulating cell movements during gastrulation. The polypeptide is Glypican-3 (GPC3) (Pan troglodytes (Chimpanzee)).